The sequence spans 241 residues: tRNA (guanine-N(7)-)-methyltransferase (241 aa).

Polar residues predominate over residues 1–10; the sequence is MTESNETPNT. Residues 1-21 form a disordered region; the sequence is MTESNETPNTPEAGDESKHRR. Residues Glu-71, Glu-96, Asp-123, and Asp-146 each contribute to the S-adenosyl-L-methionine site. Asp-146 is an active-site residue. Substrate contacts are provided by residues Lys-150, Asp-182, and 219 to 222; that span reads TKFE.

This sequence belongs to the class I-like SAM-binding methyltransferase superfamily. TrmB family.

The catalysed reaction is guanosine(46) in tRNA + S-adenosyl-L-methionine = N(7)-methylguanosine(46) in tRNA + S-adenosyl-L-homocysteine. The protein operates within tRNA modification; N(7)-methylguanine-tRNA biosynthesis. In terms of biological role, catalyzes the formation of N(7)-methylguanine at position 46 (m7G46) in tRNA. The polypeptide is tRNA (guanine-N(7)-)-methyltransferase (Pseudomonas fluorescens (strain SBW25)).